The primary structure comprises 1231 residues: MKEEVKGIPVRVALRCRPLVSKEIKEGCQTCLSFVPGEPQVVVGNDKSFTYDFVFDPSTEQEEVFNTAVAPLIKGVFKGYNATVLAYGQTGSGKTYSMGGAYTAEQEHDSAIGVIPRVIQLLFKEINKKSDFEFTLKVSYLEIYNEEILDLLCSSREKATQINIREDPKEGIKIVGLTEKTVLVASDTVSCLEQGNNSRTVASTAMNSQSSRSHAIFTISIEQRKKNDKNSSFRSKLHLVDLAGSERQKKTKAEGDRLREGININRGLLCLGNVISALGDDKKGNFVPYRDSKLTRLLQDSLGGNSHTLMIACVSPADSNLEETLNTLRYADRARKIKNKPIINIDPQAAELNHLKQQVQQLQILLLQAHGGTLPGDINVEPSENLQSLMEKNQSLVEENEKLSRGLSEAAGQTAQMLERIILTEQANEKMNAKLEELRRHAACKVDLQKLVETLEDQELKENIEIICNLQQVIAQLSDEAAACMTATIDTAGEADTQVQSSPDTSRSSDVFSTQHALRQAQMSKELIELNKALALKEALAKKMTQNDNQLQPIQFQYQDNIKNLESEVLSLQREKEELVLELQTAKKDANQAKLSERRRKRLQELEGQIADLKKKLQEQSKLLKLKESTEHTVSKLNQEIRMMKNQRVQLMRQMKEDAEKFRQWKQQKDKEVIQLKERDRKRQYELLKLERNFQKQSNVLRRKTEEAAAANKRLKDALQKQKEVAEKRKETQSRGMESTAARMKNWLGNEIEVMVSTEEAKRHLNGLLEERKILAQDVAQLKEKRESGENPPLKLRRRTFSYDEIHGQDSGAEDSIAKQIESLETELELRSAQIADLQQKLLDAESEDRPKQRWESIATILEAKCAIKYLVGELVSSKILVSKLESSLNQSKASCIDVQKMLFEEQNHFAKIETELKEELVKVEQQHQEKVLYLLSQLQQSQMTEKQLEESVSEKEQQLLSTLKCQEEELRKMQEVCEQNQQLLQENSAIKQKLTLLQVASKQKPHLTRNIFQSPDSSFEYIPPKPKPCRIKEKCLEQSFAVEGLQYYSEPSVAEQDNEDSDDHADEEWIPTKLVKVSKKSIQGCSCKGWCGNKQCGCRKQKSDCNVSCSCDPTKCRNRHQNQDNSDAIELNQDSENSFKLEDPTEVTSGLSFFHPICATPSSKILKEMCDADQVQLKQPVFVSSSDHPELKSIASESQENKAIGKKKKRALASNTSFFSGCSPIQEESH.

Residues 9–337 (PVRVALRCRP…LRYADRARKI (329 aa)) form the Kinesin motor domain. 88–95 (GQTGSGKT) is a binding site for ATP. The stretch at 351–1000 (ELNHLKQQVQ…IKQKLTLLQV (650 aa)) forms a coiled coil. S395 is modified (phosphoserine). Residue T800 is modified to Phosphothreonine. A phosphoserine mark is found at S802, S811, and S816. The globular stretch occupies residues 1001–1231 (ASKQKPHLTR…GCSPIQEESH (231 aa)). The segment at 1189 to 1212 (HPELKSIASESQENKAIGKKKKRA) is disordered. Phosphoserine occurs at positions 1224 and 1230.

It belongs to the TRAFAC class myosin-kinesin ATPase superfamily. Kinesin family. Chromokinesin subfamily. Requires [2Fe-2S] cluster as cofactor. [4Fe-4S] cluster is required as a cofactor. Expressed in pyramidal cells in juvenile hippocampus, granular cells in juvenile cerebellar cortex and in adult spleen.

The protein resides in the nucleus. Its subcellular location is the chromosome. It is found in the cytoplasm. The protein localises to the cytoskeleton. Functionally, iron-sulfur (Fe-S) cluster binding motor protein that has a role in chromosome segregation during mitosis. Required for mitotic chromosomal positioning and bipolar spindle stabilization. The sequence is that of Chromosome-associated kinesin KIF4 (Kif4) from Mus musculus (Mouse).